The following is a 260-amino-acid chain: Acidic leucine-rich nuclear phosphoprotein 32 family member E (260 aa).

Position 1 is an N-acetylmethionine (Met-1). LRR repeat units follow at residues 18 to 38 (EVTE…EGLN), 43 to 64 (ELEF…PSLN), 65 to 87 (KLRK…AEKC), and 89 to 110 (NLTY…EALQ). A Glycyl lysine isopeptide (Lys-Gly) (interchain with G-Cter in SUMO2) cross-link involves residue Lys-68. An LRRCT domain is found at 123–161 (CEITNLEDYRESIFELLQQITYLDGFDQEDNEAPDSEEE). 2 stretches are compositionally biased toward acidic residues: residues 149–208 (DQED…EEEV) and 218–240 (IQDE…EEEE). Positions 149 to 260 (DQEDNEAPDS…AEDDGEEDDD (112 aa)) are disordered. The interval 207–260 (EVGLSYLMKDEIQDEEDDDDYVDEGEEEEEEEEEGLRGEKRKRDAEDDGEEDDD) is ZID domain. Residues 241 to 251 (GLRGEKRKRDA) show a composition bias toward basic and acidic residues.

The protein belongs to the ANP32 family. Component of a SWR1-like complex, composed of EP400, KAT5/TIP60, TRRAP, BRD8, RUVBL1, RUVBL2, ING3 and ANP32E; the complex does not contain SRCAP. Interacts with H2A.Z/H2AZ1. Interacts with the importin alpha KPNA1 and KPNA2. Post-translationally, phosphorylated. The phosphorylation is nuclear localization signal (NLS)-dependent. As to expression, expressed at highest levels in cerebellum and spleen. In the cerebellum, expressed mainly in granule cells and, to a lesser extent, in Purkinje cells.

It is found in the cytoplasm. It localises to the nucleus. In terms of biological role, histone chaperone that specifically mediates the genome-wide removal of histone H2A.Z/H2AZ1 from the nucleosome: removes H2A.Z/H2AZ1 from its normal sites of deposition, especially from enhancer and insulator regions. Not involved in deposition of H2A.Z/H2AZ1 in the nucleosome. May stabilize the evicted H2A.Z/H2AZ1-H2B dimer, thus shifting the equilibrium towards dissociation and the off-chromatin state. Inhibits activity of protein phosphatase 2A (PP2A). Does not inhibit protein phosphatase 1. May play a role in cerebellar development and synaptogenesis. The sequence is that of Acidic leucine-rich nuclear phosphoprotein 32 family member E (Anp32e) from Mus musculus (Mouse).